Here is a 487-residue protein sequence, read N- to C-terminus: 3-octaprenyl-4-hydroxybenzoate carboxy-lyase (487 aa).

Position 172 (Asn172) interacts with Mn(2+). Residues 175–177 (IYR), 189–191 (RWL), and 194–195 (RG) each bind prenylated FMN. Glu238 is a Mn(2+) binding site. The active-site Proton donor is the Asp287.

It belongs to the UbiD family. As to quaternary structure, homohexamer. Requires prenylated FMN as cofactor. Mn(2+) is required as a cofactor.

It localises to the cell membrane. The enzyme catalyses a 4-hydroxy-3-(all-trans-polyprenyl)benzoate + H(+) = a 2-(all-trans-polyprenyl)phenol + CO2. The protein operates within cofactor biosynthesis; ubiquinone biosynthesis. In terms of biological role, catalyzes the decarboxylation of 3-octaprenyl-4-hydroxy benzoate to 2-octaprenylphenol, an intermediate step in ubiquinone biosynthesis. The chain is 3-octaprenyl-4-hydroxybenzoate carboxy-lyase from Nitrosomonas eutropha (strain DSM 101675 / C91 / Nm57).